A 132-amino-acid chain; its full sequence is Interleukin-5 (132 aa).

A signal peptide spans 1-19; it reads MRMLLCLNVLTLSCVWAIA. 3 N-linked (GlcNAc...) asparagine glycosylation sites follow: asparagine 45, asparagine 74, and asparagine 88.

Belongs to the IL-5 family. In terms of assembly, homodimer; disulfide-linked. Interacts with IL5RA. Interacts with CSF2RB.

It localises to the secreted. In terms of biological role, homodimeric cytokine expressed predominantly by T-lymphocytes and NK cells that plays an important role in the survival, differentiation, and chemotaxis of eosinophils. Acts also on activated and resting B-cells to induce immunoglobulin production, growth, and differentiation. Mechanistically, exerts its biological effects through a receptor composed of IL5RA subunit and the cytokine receptor common subunit beta/CSF2RB. Binding to the receptor leads to activation of various kinases including LYN, SYK and JAK2 and thereby propagates signals through the RAS-MAPK and JAK-STAT5 pathways respectively. This is Interleukin-5 (Il5) from Rattus norvegicus (Rat).